The primary structure comprises 861 residues: E3 ubiquitin-protein ligase SH3RF1 (861 aa).

The RING-type zinc-finger motif lies at Cys12–Arg53. SH3 domains lie at Pro132 to Pro191 and Gln194 to Ala257. Residues Ser268 to Ser319 form a disordered region. Residues Gly273–Ser285 show a composition bias toward low complexity. Polar residues predominate over residues Phe301–Arg317. The SH3 3 domain occupies Thr435–Arg496. Positions Asn684 to Ser731 are disordered. Positions Lys689–Gly700 are enriched in basic and acidic residues. One can recognise an SH3 4 domain in the interval Arg802 to Ile861.

It belongs to the SH3RF family. In terms of processing, autoubiquitinated. Ubiquitinated by SH3RF2, leading to proteasome-mediated degradation.

Its subcellular location is the cytoplasm. It is found in the perinuclear region. The protein localises to the cell projection. The protein resides in the lamellipodium. It localises to the golgi apparatus. Its subcellular location is the trans-Golgi network. It carries out the reaction S-ubiquitinyl-[E2 ubiquitin-conjugating enzyme]-L-cysteine + [acceptor protein]-L-lysine = [E2 ubiquitin-conjugating enzyme]-L-cysteine + N(6)-ubiquitinyl-[acceptor protein]-L-lysine.. It functions in the pathway protein modification; protein ubiquitination. Its function is as follows. Has E3 ubiquitin-protein ligase activity. In the absence of an external substrate, it can catalyze self-ubiquitination. Acts as a scaffold protein that contributes to the effective activation of the JNK signaling pathway. The protein is E3 ubiquitin-protein ligase SH3RF1 (sh3rf1) of Xenopus tropicalis (Western clawed frog).